Consider the following 149-residue polypeptide: Mediator of RNA polymerase II transcription subunit 9 (149 aa).

The interval 18-64 (TNPTLDKPNAEATKEEFSSAENRDEKDYLTNQQPKNLSTPSTSSNGE) is disordered. Positions 25 to 45 (PNAEATKEEFSSAENRDEKDY) are enriched in basic and acidic residues. Residues 46–63 (LTNQQPKNLSTPSTSSNG) are compositionally biased toward polar residues. Short sequence motifs (nuclear localization signal) lie at residues 77 to 99 (RKDPNNLSNQLETLTGSIRHRLK) and 136 to 149 (KRDVLDDLYRKLQR).

The protein belongs to the Mediator complex subunit 9 family. As to quaternary structure, component of the Mediator complex, which is composed of at least 21 subunits that form three structurally distinct submodules. The Mediator head module contains MED6, MED8, MED11, SRB4/MED17, SRB5/MED18, ROX3/MED19, SRB2/MED20 and SRB6/MED22, the middle module contains MED1, MED4, NUT1/MED5, MED7, CSE2/MED9, NUT2/MED10, SRB7/MED21 and SOH1/MED31, and the tail module contains MED2, PGD1/MED3, RGR1/MED14, GAL11/MED15 and SIN4/MED16. The head and the middle modules interact directly with RNA polymerase II, whereas the elongated tail module interacts with gene-specific regulatory proteins. CSE2/MED9 interacts directly with MED4.

The protein resides in the nucleus. Component of the Mediator complex, a coactivator involved in the regulated transcription of nearly all RNA polymerase II-dependent genes. Mediator functions as a bridge to convey information from gene-specific regulatory proteins to the basal RNA polymerase II transcription machinery. The Mediator complex, having a compact conformation in its free form, is recruited to promoters by direct interactions with regulatory proteins and serves for the assembly of a functional preinitiation complex with RNA polymerase II and the general transcription factors. The Mediator complex unfolds to an extended conformation and partially surrounds RNA polymerase II, specifically interacting with the unphosphorylated form of the C-terminal domain (CTD) of RNA polymerase II. The Mediator complex dissociates from the RNA polymerase II holoenzyme and stays at the promoter when transcriptional elongation begins. The chain is Mediator of RNA polymerase II transcription subunit 9 (CSE2) from Saccharomyces cerevisiae (strain ATCC 204508 / S288c) (Baker's yeast).